A 347-amino-acid polypeptide reads, in one-letter code: S-adenosylmethionine:tRNA ribosyltransferase-isomerase (347 aa).

It belongs to the QueA family. In terms of assembly, monomer.

The protein localises to the cytoplasm. It catalyses the reaction 7-aminomethyl-7-carbaguanosine(34) in tRNA + S-adenosyl-L-methionine = epoxyqueuosine(34) in tRNA + adenine + L-methionine + 2 H(+). Its pathway is tRNA modification; tRNA-queuosine biosynthesis. Its function is as follows. Transfers and isomerizes the ribose moiety from AdoMet to the 7-aminomethyl group of 7-deazaguanine (preQ1-tRNA) to give epoxyqueuosine (oQ-tRNA). This Bordetella parapertussis (strain 12822 / ATCC BAA-587 / NCTC 13253) protein is S-adenosylmethionine:tRNA ribosyltransferase-isomerase.